The following is a 750-amino-acid chain: Serine/threonine-protein kinase PknG (750 aa).

The disordered stretch occupies residues Met1–Arg66. A compositionally biased stretch (polar residues) spans Ala17–Ala34. The Protein kinase domain occupies Tyr151–Leu396. ATP-binding positions include Ile157–Ile165 and Lys181. Residue Asp276 is the Proton acceptor of the active site.

The protein belongs to the protein kinase superfamily. Ser/Thr protein kinase family. Post-translationally, autophosphorylated.

The catalysed reaction is L-seryl-[protein] + ATP = O-phospho-L-seryl-[protein] + ADP + H(+). It carries out the reaction L-threonyl-[protein] + ATP = O-phospho-L-threonyl-[protein] + ADP + H(+). The chain is Serine/threonine-protein kinase PknG (pknG) from Mycobacterium bovis (strain ATCC BAA-935 / AF2122/97).